Here is a 311-residue protein sequence, read N- to C-terminus: Mediator of RNA polymerase II transcription subunit 27 (311 aa).

Serine 132 carries the post-translational modification Phosphoserine. An N6-methyllysine modification is found at lysine 134.

It belongs to the Mediator complex subunit 27 family. Component of the Mediator complex, which is composed of MED1, MED4, MED6, MED7, MED8, MED9, MED10, MED11, MED12, MED13, MED13L, MED14, MED15, MED16, MED17, MED18, MED19, MED20, MED21, MED22, MED23, MED24, MED25, MED26, MED27, MED29, MED30, MED31, CCNC, CDK8 and CDC2L6/CDK11. The MED12, MED13, CCNC and CDK8 subunits form a distinct module termed the CDK8 module. Mediator containing the CDK8 module is less active than Mediator lacking this module in supporting transcriptional activation. Individual preparations of the Mediator complex lacking one or more distinct subunits have been variously termed ARC, CRSP, DRIP, PC2, SMCC and TRAP.

The protein resides in the nucleus. Functionally, component of the Mediator complex, a coactivator involved in the regulated transcription of nearly all RNA polymerase II-dependent genes. Mediator functions as a bridge to convey information from gene-specific regulatory proteins to the basal RNA polymerase II transcription machinery. Mediator is recruited to promoters by direct interactions with regulatory proteins and serves as a scaffold for the assembly of a functional preinitiation complex with RNA polymerase II and the general transcription factors. This Bos taurus (Bovine) protein is Mediator of RNA polymerase II transcription subunit 27 (MED27).